The primary structure comprises 189 residues: ATP synthase subunit b (189 aa).

A helical membrane pass occupies residues 23–43 (IEIVLSLVVFGLLLFAVWKFV).

It belongs to the ATPase B chain family. F-type ATPases have 2 components, F(1) - the catalytic core - and F(0) - the membrane proton channel. F(1) has five subunits: alpha(3), beta(3), gamma(1), delta(1), epsilon(1). F(0) has three main subunits: a(1), b(2) and c(10-14). The alpha and beta chains form an alternating ring which encloses part of the gamma chain. F(1) is attached to F(0) by a central stalk formed by the gamma and epsilon chains, while a peripheral stalk is formed by the delta and b chains.

The protein resides in the cell membrane. Functionally, f(1)F(0) ATP synthase produces ATP from ADP in the presence of a proton or sodium gradient. F-type ATPases consist of two structural domains, F(1) containing the extramembraneous catalytic core and F(0) containing the membrane proton channel, linked together by a central stalk and a peripheral stalk. During catalysis, ATP synthesis in the catalytic domain of F(1) is coupled via a rotary mechanism of the central stalk subunits to proton translocation. In terms of biological role, component of the F(0) channel, it forms part of the peripheral stalk, linking F(1) to F(0). In Nocardioides sp. (strain ATCC BAA-499 / JS614), this protein is ATP synthase subunit b.